The primary structure comprises 367 residues: F-box protein At3g56470 (367 aa).

The span at 1-18 shows a compositional bias: basic residues; the sequence is MVTRRRSKKKKKTKRKKQ. Residues 1–24 form a disordered region; that stretch reads MVTRRRSKKKKKTKRKKQSSKEKE. The region spanning 26–81 is the F-box domain; that stretch reads YQTFINLPCDLLQLVISRLPLKDNIRASAVCKTWHEACVSLRVIHTSPWLIYFSKT.

This chain is F-box protein At3g56470, found in Arabidopsis thaliana (Mouse-ear cress).